Consider the following 109-residue polypeptide: Thiosulfate sulfurtransferase GlpE (109 aa).

Residues 16–104 (REQGAVVVDI…WRSTYPAETA (89 aa)) form the Rhodanese domain. Cys64 (cysteine persulfide intermediate) is an active-site residue.

The protein belongs to the GlpE family.

It is found in the cytoplasm. It catalyses the reaction thiosulfate + hydrogen cyanide = thiocyanate + sulfite + 2 H(+). It carries out the reaction thiosulfate + [thioredoxin]-dithiol = [thioredoxin]-disulfide + hydrogen sulfide + sulfite + 2 H(+). In terms of biological role, transferase that catalyzes the transfer of sulfur from thiosulfate to thiophilic acceptors such as cyanide or dithiols. May function in a CysM-independent thiosulfate assimilation pathway by catalyzing the conversion of thiosulfate to sulfite, which can then be used for L-cysteine biosynthesis. This chain is Thiosulfate sulfurtransferase GlpE, found in Pseudomonas fluorescens (strain ATCC BAA-477 / NRRL B-23932 / Pf-5).